The following is a 434-amino-acid chain: Pancreatic lipase-related protein 2 (434 aa).

Cysteines 4 and 10 form a disulfide. The interval 76 to 88 (IHGFTDSGENSWL) is required for galactolipase activity. Cysteines 92 and 103 form a disulfide. Catalysis depends on Ser154, which acts as the Nucleophile. Residue Asp178 is the Charge relay system of the active site. Positions 189, 192, 194, and 197 each coordinate Ca(2+). A disulfide bond links Cys239 and Cys245. Residues 240 to 244 (KTGIS) are required for galactolipase activity. Residue His247 is the Charge relay system of the active site. Disulfide bonds link Cys269-Cys280 and Cys283-Cys288. A glycan (N-linked (GlcNAc...) asparagine) is linked at Asn318. Residues 322-434 (WRYKVTVTLS…ENVEQTLSPC (113 aa)) enclose the PLAT domain. A disulfide bridge links Cys418 with Cys434.

The protein belongs to the AB hydrolase superfamily. Lipase family. Pancreas.

The protein resides in the secreted. Its subcellular location is the zymogen granule membrane. It is found in the cell projection. The protein localises to the neuron projection. It carries out the reaction a triacylglycerol + H2O = a diacylglycerol + a fatty acid + H(+). The catalysed reaction is a 1,2-diacyl-3-O-(beta-D-galactosyl)-sn-glycerol + 2 H2O = 3-beta-D-galactosyl-sn-glycerol + 2 a fatty acid + 2 H(+). The enzyme catalyses 1,2,3-tri-(9Z-octadecenoyl)-glycerol + H2O = di-(9Z)-octadecenoylglycerol + (9Z)-octadecenoate + H(+). It catalyses the reaction di-(9Z)-octadecenoylglycerol + H2O = (9Z-octadecenoyl)-glycerol + (9Z)-octadecenoate + H(+). It carries out the reaction (9Z-octadecenoyl)-glycerol + H2O = glycerol + (9Z)-octadecenoate + H(+). The catalysed reaction is 1-(9Z-octadecenoyl)-glycerol + H2O = glycerol + (9Z)-octadecenoate + H(+). The enzyme catalyses 1,2,3-tripropanoylglycerol + H2O = dipropanoylglycerol + propanoate + H(+). It catalyses the reaction 1,2,3-tributanoylglycerol + H2O = dibutanoylglycerol + butanoate + H(+). It carries out the reaction 1,2,3-trioctanoylglycerol + H2O = dioctanoylglycerol + octanoate + H(+). The catalysed reaction is 1,2-didecanoylglycerol + H2O = decanoylglycerol + decanoate + H(+). The enzyme catalyses long chain 1,2-diacyl-3-O-beta-D-galactosyl-sn-glycerol + H2O = long chain acyl-3-O-beta-D-galactosyl-sn-glycerol + a fatty acid + H(+). It catalyses the reaction 1,2-dioctanoyl-3-O-beta-D-galactosyl-sn-glycerol + H2O = octanoyl-3-(beta-D-galactosyl)-sn-glycerol + octanoate + H(+). It carries out the reaction 1,2-didodecanoyl-3-beta-D-galactosyl-sn-glycerol + H2O = dodecanoyl-3-beta-D-galactosyl-sn-glycerol + dodecanoate + H(+). The catalysed reaction is 1-beta-D-galactosyl-2,3-didodecanoyl-sn-glycerol + H2O = 1-beta-D-galactosyl-dodecanoyl-sn-glycerol + dodecanoate + H(+). The enzyme catalyses a 1,2-diacyl-3-O-[alpha-D-galactosyl-(1-&gt;6)-beta-D-galactosyl]-sn-glycerol + H2O = acyl-3-O-[alpha-D-galactosyl-(1-&gt;6)-beta-D-galactosyl]-sn-glycerol + a fatty acid + H(+). It catalyses the reaction long chain 1,2-diacyl-3-O-[alpha-D-galactosyl-(1-&gt;6)-beta-D-galactosyl]-sn-glycerol + H2O = long chain acyl-3-O-[alpha-D-galactosyl-(1-&gt;6)-beta-D-galactosyl]-sn-glycerol + a fatty acid + H(+). It carries out the reaction 1,2-dioctanoyl-3-O-[alpha-D-galactosyl-(1-&gt;6)-beta-D-galactosyl]-sn-glycerol + H2O = octanoyl-3-O-[alpha-D-galactosyl-(1-&gt;6)-beta-D-galactosyl]-sn-glycerol + octanoate + H(+). The catalysed reaction is 1,2-didodecanoyl-3-O-[alpha-D-galactosyl-(1-&gt;6)-beta-D-galactosyl]-sn-glycerol + H2O = dodecanoyl-3-O-[alpha-D-galactosyl-(1-&gt;6)-beta-D-galactosyl]-sn-glycerol + dodecanoate + H(+). The enzyme catalyses a 1,2-diacyl-sn-glycero-3-phosphocholine + H2O = a monoacyl-sn-glycero-3-phosphocholine + a fatty acid + H(+). The protein operates within glycerolipid metabolism; triacylglycerol degradation. Its pathway is glycolipid metabolism. Its activity is regulated as follows. CLPS stimulates triacylglycerol lipase activity. Not inhibited by bile salts. In terms of biological role, lipase that primarily hydrolyzes triglycerides and galactosylglycerides. In neonates, may play a major role in pancreatic digestion of dietary fats such as milk fat globules enriched in long-chain triglycerides. Hydrolyzes short-, medium- and long-chain fatty acyls in triglycerides without apparent positional specificity. Can completely deacylate triacylglycerols. When the liver matures and bile salt synthesis increases, likely functions mainly as a galactolipase and monoacylglycerol lipase. Hydrolyzes monogalactosyldiglycerols (MGDG) and digalactosyldiacylglycerols (DGDG) present in a plant-based diet, releasing long-chain polyunsaturated fatty acids. Hydrolyzes medium- and long-chain fatty acyls in galactolipids. May act together with LIPF to hydrolyze partially digested triglycerides. Hydrolyzes long-chain monoglycerides with high efficiency. In cytotoxic T cells, contributes to perforin-dependent cell lysis, but is unlikely to mediate direct cytotoxicity. Also has low phospholipase activity. In neurons, required for the localization of the phospholipid 1-oleoyl-2-palmitoyl-PC (OPPC) to neurite tips through acyl chain remodeling of membrane phospholipids. The resulting OPPC-rich lipid membrane domain recruits the t-SNARE protein STX4 by selectively interacting with the STX4 transmembrane domain and this promotes surface expression of the dopamine transporter SLC6A3/DAT at neurite tips by facilitating fusion of SLC6A3-containing transport vesicles with the plasma membrane. The protein is Pancreatic lipase-related protein 2 of Cavia porcellus (Guinea pig).